The following is a 466-amino-acid chain: 3-isopropylmalate dehydratase large subunit (466 aa).

The [4Fe-4S] cluster site is built by Cys347, Cys407, and Cys410.

Belongs to the aconitase/IPM isomerase family. LeuC type 1 subfamily. Heterodimer of LeuC and LeuD. [4Fe-4S] cluster serves as cofactor.

The catalysed reaction is (2R,3S)-3-isopropylmalate = (2S)-2-isopropylmalate. Its pathway is amino-acid biosynthesis; L-leucine biosynthesis; L-leucine from 3-methyl-2-oxobutanoate: step 2/4. Functionally, catalyzes the isomerization between 2-isopropylmalate and 3-isopropylmalate, via the formation of 2-isopropylmaleate. This is 3-isopropylmalate dehydratase large subunit from Shigella boydii serotype 4 (strain Sb227).